We begin with the raw amino-acid sequence, 735 residues long: MEHADQYSWIIPFVPLPIPILIGMGLLLFPTATKNLRRMWAFPNILLLSIVMIFSLDLSIQQINGSSIYQYVWSWTINNDFSFEFGYFIDSLTSIMSILITTVGIFVLIYSDNYMSHDEGYLRFFAYMSLFNTSMLGLVTSCNLIQIYIFWELVGMCSYLLIGFWFTRPAAANACQKAFVTNRIGDFGLLLGILGFYWITGSFEFQDLFEIFNNLIYNNEVHFLFVTLCASLLFAGAVAKSAQFPLHVWLPDAMEGPTPISALIHAATMVAAGIFLVARLLPLFIVIPYIMNLISLIGIITVLLGATLALAQNDIKRGLAYSTMSQLGYMMLALGMGSYRAALFHLITHAYSKALLFLASGSIIHSMEAIVGYSPEKSQNMVFMGGLRKHVPVTQIAFLVGTLSLCGIPPLACFWSKDEILSDSWLYSPIFAIIAWSTAGLTAFYMFRIYLLTFEGHLNVHFQKYSGKKSSSFYSIKLWGKEEQKIINRNFRLFPLLTLTMNNNEQPYTIGGKKEARITITNFGYKKAFSYPHESDNTMLFPMLILLLFTLFVGAIAIPFNQEGMHLDILSKLLTPSINLLHQNSNDFEDSYQFFKNATFSVSIACFGIFTAFLLYKPFYSSVQNLNLLNSFVKRGPKRILLDKMIYLIYDWSYNRGYIDMFYSISLTKGIRGLAELTHFFDRRVIDGITNGVGITSFFVGESVKYLGGSRISFYLLLYLVYVFIFLVISYFILF.

The next 16 helical transmembrane spans lie at 9-29, 40-60, 89-109, 125-145, 147-167, 184-204, 219-239, 258-278, 280-300, 327-347, 354-374, 396-416, 425-445, 540-560, 600-620, and 714-734; these read WIIP…LLLF, WAFP…DLSI, IDSL…FVLI, FAYM…CNLI, IYIF…FWFT, IGDF…GSFE, NEVH…GAVA, TPIS…FLVA, LLPL…IGII, LGYM…FHLI, ALLF…VGYS, IAFL…CFWS, WLYS…TAFY, LFPM…AIPF, FSVS…KPFY, and FYLL…YFIL.

The protein belongs to the complex I subunit 5 family. In terms of assembly, NDH is composed of at least 16 different subunits, 5 of which are encoded in the nucleus.

It is found in the plastid. Its subcellular location is the chloroplast thylakoid membrane. The catalysed reaction is a plastoquinone + NADH + (n+1) H(+)(in) = a plastoquinol + NAD(+) + n H(+)(out). The enzyme catalyses a plastoquinone + NADPH + (n+1) H(+)(in) = a plastoquinol + NADP(+) + n H(+)(out). Its function is as follows. NDH shuttles electrons from NAD(P)H:plastoquinone, via FMN and iron-sulfur (Fe-S) centers, to quinones in the photosynthetic chain and possibly in a chloroplast respiratory chain. The immediate electron acceptor for the enzyme in this species is believed to be plastoquinone. Couples the redox reaction to proton translocation, and thus conserves the redox energy in a proton gradient. This Gossypium hirsutum (Upland cotton) protein is NAD(P)H-quinone oxidoreductase subunit 5, chloroplastic (ndhF).